We begin with the raw amino-acid sequence, 685 residues long: Hemocyanin subunit X (685 aa).

Residues 1–20 form the signal peptide; the sequence is MKYCTESLILILAVIGCISA. Cu cation contacts are provided by His-210, His-214, and His-243. N-linked (GlcNAc...) asparagine glycosylation is present at Asn-329. Cu cation is bound by residues His-367, His-371, and His-407. Cysteines 577 and 625 form a disulfide.

It belongs to the tyrosinase family. Hemocyanin subfamily.

The protein resides in the secreted. The protein localises to the extracellular space. Hemocyanins are copper-containing oxygen carriers occurring freely dissolved in the hemolymph of many mollusks and arthropods. The protein is Hemocyanin subunit X (HCX) of Scutigera coleoptrata (House centipede).